Consider the following 179-residue polypeptide: uncharacterized protein (179 aa).

Residues 1-10 (ATLSAGQPAS) show a composition bias toward polar residues. 3 disordered regions span residues 1-35 (ATLS…RGKC), 59-80 (VRRN…PIVT), and 131-179 (ECPT…STCR). Over residues 23–33 (LHRHPAPKRRG) the composition is skewed to basic residues. A compositionally biased stretch (basic residues) spans 149 to 158 (TPSRVRRSRR).

This is an uncharacterized protein from Human cytomegalovirus (strain AD169) (HHV-5).